The sequence spans 487 residues: Glutamate--tRNA ligase 2 (487 aa).

Residues 31 to 41 (PSPTGHLHVGG) carry the 'HIGH' region motif. Residues 254–258 (PLSKR) carry the 'KMSKS' region motif. Lys-257 is an ATP binding site.

This sequence belongs to the class-I aminoacyl-tRNA synthetase family. Glutamate--tRNA ligase type 1 subfamily. In terms of assembly, monomer.

It localises to the cytoplasm. The enzyme catalyses tRNA(Glu) + L-glutamate + ATP = L-glutamyl-tRNA(Glu) + AMP + diphosphate. Functionally, catalyzes the attachment of glutamate to tRNA(Glu) in a two-step reaction: glutamate is first activated by ATP to form Glu-AMP and then transferred to the acceptor end of tRNA(Glu). The protein is Glutamate--tRNA ligase 2 of Thermotoga maritima (strain ATCC 43589 / DSM 3109 / JCM 10099 / NBRC 100826 / MSB8).